A 706-amino-acid chain; its full sequence is Choline transporter-like protein 2 (706 aa).

The Cytoplasmic segment spans residues 1–33; sequence MGKEQQLYYGKHGTPQKYDPAFRGPIYNRGCTD. Position 14 is a phosphothreonine (T14). A helical membrane pass occupies residues 34 to 54; it reads IICCVFLFLAIVGYVAVGIIA. At 55 to 232 the chain is on the extracellular side; it reads WTHGDPRKVI…RIFEDYTVSW (178 aa). N-linked (GlcNAc...) asparagine glycosylation is found at N187 and N200. Residues 233-253 traverse the membrane as a helical segment; sequence YWIIIGLIIAMVLSLLFIILL. Residues 254–256 are Cytoplasmic-facing; it reads RFL. A helical transmembrane segment spans residues 257 to 277; it reads AGIMVWVMIVMVILVLGYGIL. Residues 278–315 are Extracellular-facing; the sequence is HCYMEYARLRGEAGSDVSLVDLGFQTDFRVYLHLRQTW. A helical membrane pass occupies residues 316 to 336; sequence VAFMIILSIVEVIIILLLIFL. The Cytoplasmic segment spans residues 337-364; that stretch reads RKRILIAIALIKEASRAVGYVMCSLLYP. Residues 365 to 385 traverse the membrane as a helical segment; the sequence is LVTFFLLCLCIAYWASTAIFL. Residues 386-457 lie on the Extracellular side of the membrane; the sequence is STSNEAVYKI…FNVFMFFWLA (72 aa). 2 N-linked (GlcNAc...) asparagine glycosylation sites follow: N397 and N417. A helical membrane pass occupies residues 458–480; sequence NFVLALGQVTLAGAFASYYWAMN. At 481 to 504 the chain is on the cytoplasmic side; it reads KPDDLPAFPLFSAFGRALRYHTGS. Residues 505 to 525 traverse the membrane as a helical segment; it reads LAFGSLLLAIVQVIRVILEYL. Residues 526-563 are Extracellular-facing; sequence DQRLKAAENKFAKFLMSCLKCCFWCLEKFIKFLNRNAY. Residues 564-584 form a helical membrane-spanning segment; sequence IMIAIYGTNFCTSARNAFFLL. At 585-599 the chain is on the cytoplasmic side; it reads MRNIIRVAVLDKVTD. A helical transmembrane segment spans residues 600-620; that stretch reads FLFLLGKLLIVGSVGILAFFF. The Extracellular portion of the chain corresponds to 621-638; the sequence is FTHRIRIVQDTAPSLNYY. A helical membrane pass occupies residues 639–659; sequence WVPVVTVVIGSYLIAHGFFSV. The Cytoplasmic portion of the chain corresponds to 660-706; that stretch reads YGMCVDTLFLCFLEDLERNDGTPERPYFMSLTLKKILNKTNKRQAEA.

The protein belongs to the CTL (choline transporter-like) family. Interacts with COCH. In terms of processing, N-glycosylated.

Its subcellular location is the cell membrane. The protein resides in the mitochondrion outer membrane. The catalysed reaction is choline(out) + n H(+)(in) = choline(in) + n H(+)(out). The enzyme catalyses ethanolamine(out) + n H(+)(in) = ethanolamine(in) + n H(+)(out). Choline/H+ antiporter, mainly in mitochodria. Also acts as a low-affinity ethanolamine/H+ antiporter, regulating the supply of extracellular ethanolamine (Etn) for the CDP-Etn pathway, redistribute intracellular Etn and balance the CDP-Cho and CDP-Etn arms of the Kennedy pathway. The sequence is that of Choline transporter-like protein 2 (SLC44A2) from Bos taurus (Bovine).